Consider the following 250-residue polypeptide: Probable transcriptional regulatory protein SCO1521 (250 aa).

The protein belongs to the TACO1 family.

It localises to the cytoplasm. In Streptomyces coelicolor (strain ATCC BAA-471 / A3(2) / M145), this protein is Probable transcriptional regulatory protein SCO1521.